The chain runs to 500 residues: ATP synthase subunit alpha (500 aa).

Position 169 to 176 (169 to 176) interacts with ATP; sequence GDRQTGKT.

It belongs to the ATPase alpha/beta chains family. As to quaternary structure, F-type ATPases have 2 components, CF(1) - the catalytic core - and CF(0) - the membrane proton channel. CF(1) has five subunits: alpha(3), beta(3), gamma(1), delta(1), epsilon(1). CF(0) has three main subunits: a(1), b(2) and c(9-12). The alpha and beta chains form an alternating ring which encloses part of the gamma chain. CF(1) is attached to CF(0) by a central stalk formed by the gamma and epsilon chains, while a peripheral stalk is formed by the delta and b chains.

Its subcellular location is the cell membrane. The enzyme catalyses ATP + H2O + 4 H(+)(in) = ADP + phosphate + 5 H(+)(out). Produces ATP from ADP in the presence of a proton gradient across the membrane. The alpha chain is a regulatory subunit. This is ATP synthase subunit alpha from Lactococcus lactis subsp. cremoris (strain SK11).